A 1136-amino-acid chain; its full sequence is Pesticidal crystal protein Cry4B protoxin (1136 aa).

Residues 84 to 282 form a domain I region; the sequence is TPERVWNDFM…PADKIDNTKL (199 aa). The segment at 283–466 is domain II; that stretch reads SKTEFTREIY…SNRVSFAWTH (184 aa). The domain III stretch occupies residues 467 to 641; it reads KIVDPNNQIY…PITQSVLDET (175 aa).

This sequence belongs to the delta endotoxin family. In the presence of micelles active toxin forms oligomers that can be fit into cryo-EM maps as trimers. Binds to host (A.gambiae) cadherin AgCad1 (also called BT-R3), probably on the cell surface. Activated toxin may bind its host AgCad1 receptor as a monomer, but also forms an oligomer that is not active. Mg(2+) serves as cofactor. In terms of processing, treatment of recombinant protein with A.aegypti 3rd instar larvae midgut extract for 1 hour yields major bands of 72 and 45 kDa, the combined proteins are toxic to mosquitoes. Longer digestion, which removes the 72 kDa protein, yields a non-toxic preparation. Proteolysis by yields a 65 kDa toxic protein and 48 and 17 kDa fragments which are not toxic. In terms of tissue distribution, host (A.gambiae) larval midgut; binds to host brush border membranes, probably to cadherin-AgCad1 (Cad1, also called BT-R3).

The protein resides in the spore. With respect to regulation, toxic activity on Trichoplusia ni insect cells stably transfected with the AgCad1/BT-R3 receptor leads to oncosis, cell death characterized by cell swelling, membrane blebbing and depletion of energy reserves. Cell death is blocked by EDTA (but not EGTA) and is partially prevented by pretreatment with NF449 (inhibits G-s-alpha-60A and adenylyl cyclase, AC) and 2',5'-dideoxyadenosine 3'-diphosphate (ddADP, inhibits AC), while H-89 and PKAI 14-22 (both inhibit protein kinase A), ouabain (inhibits Na+/K+-ATPase) and a cell exocytosis inhibitor (Exo1) nearly completely prevent the action of the toxin in this system. The cAMP analog pCPT-cAMP and the AC activator FSK enhance toxicity. Functionally, a pesticidal protein active against Aedes and Anopheles mosquito species; activity on Culex species is strain dependent. It remains toxic to permethrin-resistant strains of A.gambiae. Following activation of the protoxin by mosquito larvae midgut extract (or by chymotrypsin or trypsin treatment) it becomes insecticidal. Causes mosquito cell death by activating a host G-protein-coupled receptor which subsequently activates adenylyl cyclase and increases cAMP production. cAMP activates protein kinase A which sets off a series of downstream events which includes increased exocytosis (probably bringing more receptor to the cell membrane), Na+/K+-ATPase activation and eventual host cell death. Another group suggests that alkaline phosphatase serves as the insect receptor and that the protein forms pores in insect cell membranes. The polypeptide is Pesticidal crystal protein Cry4B protoxin (Bacillus thuringiensis subsp. israelensis).